The sequence spans 320 residues: Methionyl-tRNA formyltransferase (320 aa).

A (6S)-5,6,7,8-tetrahydrofolate-binding site is contributed by 112-115 (SLLP).

The protein belongs to the Fmt family.

The enzyme catalyses L-methionyl-tRNA(fMet) + (6R)-10-formyltetrahydrofolate = N-formyl-L-methionyl-tRNA(fMet) + (6S)-5,6,7,8-tetrahydrofolate + H(+). In terms of biological role, attaches a formyl group to the free amino group of methionyl-tRNA(fMet). The formyl group appears to play a dual role in the initiator identity of N-formylmethionyl-tRNA by promoting its recognition by IF2 and preventing the misappropriation of this tRNA by the elongation apparatus. The protein is Methionyl-tRNA formyltransferase of Allorhizobium ampelinum (strain ATCC BAA-846 / DSM 112012 / S4) (Agrobacterium vitis (strain S4)).